The chain runs to 337 residues: Putative 2-aminoethylphosphonate-binding periplasmic protein (337 aa).

Residues 1–21 (MKLSRLALLSVFALASAPSWA) form the signal peptide.

Belongs to the bacterial solute-binding protein 1 family.

The protein localises to the periplasm. Probably part of the PhnSTUV complex (TC 3.A.1.11.5) involved in 2-aminoethylphosphonate import. This Salmonella typhimurium (strain LT2 / SGSC1412 / ATCC 700720) protein is Putative 2-aminoethylphosphonate-binding periplasmic protein (phnS).